The primary structure comprises 403 residues: Serine/threonine transporter SstT (403 aa).

9 helical membrane-spanning segments follow: residues 16–36 (QIVI…AIAL), 45–65 (FVSA…MASI), 79–99 (ILWL…VASM), 138–158 (ALLN…GVAL), 175–195 (GVTL…FGLV), 214–234 (LAVL…LIVF), 295–315 (MAGA…TLGI), 327–347 (MVAA…LLLI), and 353–373 (LFGI…IIGV).

This sequence belongs to the dicarboxylate/amino acid:cation symporter (DAACS) (TC 2.A.23) family.

It localises to the cell inner membrane. The enzyme catalyses L-serine(in) + Na(+)(in) = L-serine(out) + Na(+)(out). The catalysed reaction is L-threonine(in) + Na(+)(in) = L-threonine(out) + Na(+)(out). Its function is as follows. Involved in the import of serine and threonine into the cell, with the concomitant import of sodium (symport system). The sequence is that of Serine/threonine transporter SstT from Pseudomonas putida (strain W619).